Consider the following 82-residue polypeptide: Sec-independent protein translocase protein TatA (82 aa).

The helical transmembrane segment at 1 to 21 (MGSFSIWHWLIVLLIVVMVFG) threads the bilayer. Residues 46-82 (GASTDDSATTSAPAGQVTNNSTAADKTTIDVEAKHKS) form a disordered region. Residues 49–70 (TDDSATTSAPAGQVTNNSTAAD) are compositionally biased toward polar residues. Over residues 72–82 (TTIDVEAKHKS) the composition is skewed to basic and acidic residues.

Belongs to the TatA/E family. As to quaternary structure, the Tat system comprises two distinct complexes: a TatABC complex, containing multiple copies of TatA, TatB and TatC subunits, and a separate TatA complex, containing only TatA subunits. Substrates initially bind to the TatABC complex, which probably triggers association of the separate TatA complex to form the active translocon.

Its subcellular location is the cell inner membrane. Part of the twin-arginine translocation (Tat) system that transports large folded proteins containing a characteristic twin-arginine motif in their signal peptide across membranes. TatA could form the protein-conducting channel of the Tat system. The chain is Sec-independent protein translocase protein TatA from Acidovorax sp. (strain JS42).